Consider the following 151-residue polypeptide: Nucleoside diphosphate kinase (151 aa).

Positions 11, 59, 87, 93, 104, and 114 each coordinate ATP. Histidine 117 functions as the Pros-phosphohistidine intermediate in the catalytic mechanism.

The protein belongs to the NDK family. In terms of assembly, homotetramer. Requires Mg(2+) as cofactor.

It localises to the cytoplasm. It carries out the reaction a 2'-deoxyribonucleoside 5'-diphosphate + ATP = a 2'-deoxyribonucleoside 5'-triphosphate + ADP. It catalyses the reaction a ribonucleoside 5'-diphosphate + ATP = a ribonucleoside 5'-triphosphate + ADP. In terms of biological role, major role in the synthesis of nucleoside triphosphates other than ATP. The ATP gamma phosphate is transferred to the NDP beta phosphate via a ping-pong mechanism, using a phosphorylated active-site intermediate. In Prochlorococcus marinus (strain MIT 9211), this protein is Nucleoside diphosphate kinase.